Here is a 539-residue protein sequence, read N- to C-terminus: Phosphoenolpyruvate carboxykinase (ATP) (539 aa).

Substrate-binding residues include Arg-64, Tyr-206, and Lys-212. ATP contacts are provided by residues Lys-212, His-231, and 247-255 (GLSGTGKTT). Lys-212 and His-231 together coordinate Mn(2+). Asp-268 serves as a coordination point for Mn(2+). ATP-binding positions include Glu-296, Arg-332, 448 to 449 (RI), and Thr-454. Arg-332 contributes to the substrate binding site.

The protein belongs to the phosphoenolpyruvate carboxykinase (ATP) family. Monomer. Mn(2+) serves as cofactor.

It is found in the cytoplasm. The catalysed reaction is oxaloacetate + ATP = phosphoenolpyruvate + ADP + CO2. It functions in the pathway carbohydrate biosynthesis; gluconeogenesis. In terms of biological role, involved in the gluconeogenesis. Catalyzes the conversion of oxaloacetate (OAA) to phosphoenolpyruvate (PEP) through direct phosphoryl transfer between the nucleoside triphosphate and OAA. The protein is Phosphoenolpyruvate carboxykinase (ATP) of Salmonella arizonae (strain ATCC BAA-731 / CDC346-86 / RSK2980).